The chain runs to 433 residues: Histidinol dehydrogenase (433 aa).

The NAD(+) site is built by tyrosine 130, glutamine 191, and asparagine 214. Substrate is bound by residues serine 237, glutamine 259, and histidine 262. Zn(2+)-binding residues include glutamine 259 and histidine 262. Active-site proton acceptor residues include glutamate 327 and histidine 328. The substrate site is built by histidine 328, aspartate 361, glutamate 415, and histidine 420. Residue aspartate 361 participates in Zn(2+) binding. Histidine 420 lines the Zn(2+) pocket.

It belongs to the histidinol dehydrogenase family. Zn(2+) serves as cofactor.

The enzyme catalyses L-histidinol + 2 NAD(+) + H2O = L-histidine + 2 NADH + 3 H(+). The protein operates within amino-acid biosynthesis; L-histidine biosynthesis; L-histidine from 5-phospho-alpha-D-ribose 1-diphosphate: step 9/9. In terms of biological role, catalyzes the sequential NAD-dependent oxidations of L-histidinol to L-histidinaldehyde and then to L-histidine. The protein is Histidinol dehydrogenase of Ruegeria pomeroyi (strain ATCC 700808 / DSM 15171 / DSS-3) (Silicibacter pomeroyi).